Reading from the N-terminus, the 975-residue chain is Glycine dehydrogenase (decarboxylating) (975 aa).

Position 723 is an N6-(pyridoxal phosphate)lysine (K723).

It belongs to the GcvP family. In terms of assembly, the glycine cleavage system is composed of four proteins: P, T, L and H. It depends on pyridoxal 5'-phosphate as a cofactor.

It catalyses the reaction N(6)-[(R)-lipoyl]-L-lysyl-[glycine-cleavage complex H protein] + glycine + H(+) = N(6)-[(R)-S(8)-aminomethyldihydrolipoyl]-L-lysyl-[glycine-cleavage complex H protein] + CO2. In terms of biological role, the glycine cleavage system catalyzes the degradation of glycine. The P protein binds the alpha-amino group of glycine through its pyridoxal phosphate cofactor; CO(2) is released and the remaining methylamine moiety is then transferred to the lipoamide cofactor of the H protein. This Burkholderia pseudomallei (strain 668) protein is Glycine dehydrogenase (decarboxylating).